Consider the following 444-residue polypeptide: Sprouty-related, EVH1 domain-containing protein 1 (444 aa).

An N-acetylserine modification is found at Ser2. Residues Ala6 to Ile123 enclose the WH1 domain. Lys225 carries the post-translational modification N6-methyllysine. In terms of domain architecture, KBD spans Ser234–Gln286. Ser239 is modified (phosphoserine). The interval Trp268–Asp287 is disordered. Ser309 carries the post-translational modification Phosphoserine. The interval Ser333–Gly444 is required for interaction with TESK1. The SPR domain maps to Arg334 to Ala442.

As to quaternary structure, homodimer and heterodimer. Able to interact with SPRED2 to form heterodimers. Interacts (via C-terminus) with TAOK1/MARKK (via C-terminus); the interaction does not affect TAOK1 kinase activity. Interacts (via C-terminus) with TESK1 (via C-terminus); the interaction inhibits TESK1 kinase activity. Interacts with CAV1. Interacts with RAS. Interacts with palmitoyltransferase ZDHHC17/HIP14; the interaction leads to palmitoylation of SPRED1. In terms of processing, palmitoylated by ZDHHC17/HIP14. Ubiquitinated. Post-translationally, phosphorylated on tyrosine. Expressed in brain. Weakly expressed in lung, heart, liver, kidney, intestine, spleen, testis, thymus, colon and ovary. Also expressed in embryonic tissues such as heart, lung, liver and brain. Highly expressed in IL3-dependent hematopoietic cell lines (Ba/F3 and MC/9) and bone marrow-derived mast cells (BMMC).

The protein localises to the cell membrane. Its subcellular location is the membrane. It is found in the caveola. The protein resides in the nucleus. Its function is as follows. Tyrosine kinase substrate that inhibits growth-factor-mediated activation of MAP kinase. Negatively regulates hematopoiesis of bone marrow. Inhibits fibroblast growth factor (FGF)-induced retinal lens fiber differentiation, probably by inhibiting FGF-mediated phosphorylation of ERK1/2. Attenuates actin stress fiber formation via inhibition of TESK1-mediated phosphorylation of cofilin. Inhibits TGFB-induced epithelial-to-mesenchymal transition in lens epithelial cells. The polypeptide is Sprouty-related, EVH1 domain-containing protein 1 (Spred1) (Mus musculus (Mouse)).